Reading from the N-terminus, the 280-residue chain is MKFVGAHVSAAGGVDQAVIRAHELKATAFALFTKNQRQWHAPHLAADVIDKFKENCERYGYGSRQILPHDSYLINLGHPESEALEKSRLAFIDEMQRCEQLGIDLLNFHPGSHLNKVDVDKCLARIAESINIALNKTQRVTAVIENTAGQGTNLGFKFEHLAAIIDGVEDKNRVGVCIDTCHAFAAGYDLRTNDVCEQTFQQFEKIVGFQYLCGMHLNDAKSEFASRVDRHHSLGEGNIGKTPFSYIMKDARFDGIPLILETINPDIWPQEIAWLKLQQN.

Zn(2+) is bound by residues His-69, His-109, Glu-145, Asp-179, His-182, His-216, Asp-229, His-231, and Glu-261.

Belongs to the AP endonuclease 2 family. It depends on Zn(2+) as a cofactor.

The enzyme catalyses Endonucleolytic cleavage to 5'-phosphooligonucleotide end-products.. Its function is as follows. Endonuclease IV plays a role in DNA repair. It cleaves phosphodiester bonds at apurinic or apyrimidinic (AP) sites, generating a 3'-hydroxyl group and a 5'-terminal sugar phosphate. The chain is Probable endonuclease 4 from Photorhabdus laumondii subsp. laumondii (strain DSM 15139 / CIP 105565 / TT01) (Photorhabdus luminescens subsp. laumondii).